We begin with the raw amino-acid sequence, 732 residues long: Zinc/cadmium/lead-transporting P-type ATPase (732 aa).

Topologically, residues 1–124 (MSTPDNHGKK…QAAEEPQASR (124 aa)) are cytoplasmic. In terms of domain architecture, HMA spans 48 to 112 (TRYSWKVSGM…ALQKAGYSLR (65 aa)). Residues aspartate 58, cysteine 59, and cysteine 62 each contribute to the Zn(2+) site. The chain crosses the membrane as a helical span at residues 125–145 (LKENLPLITLIVMMAISWGLE). Glutamine 146 is a topological domain (periplasmic). A helical membrane pass occupies residues 147-167 (FNHPFGQLAFIATTLVGLYPI). At 168–179 (ARQALRLIKSGS) the chain is on the cytoplasmic side. A helical transmembrane segment spans residues 180-197 (YFAIETLMSVAAIGALFI). The Periplasmic portion of the chain corresponds to 198 to 202 (GATAE). Residues 203–222 (AAMVLLLFLIGERLEGWAAS) traverse the membrane as a helical segment. Over 223 to 356 (RARQGVSALM…IDRFSRIYTP (134 aa)) the chain is Cytoplasmic. A helical transmembrane segment spans residues 357–377 (AIMAVALLVTLVPPLLFAASW). Over 378 to 383 (QEWIYK) the chain is Periplasmic. A helical membrane pass occupies residues 384 to 404 (GLTLLLIGCPCALVISTPAAI). The Zn(2+) site is built by cysteine 392 and cysteine 394. Residues 405 to 685 (TSGLAAAARR…RATHANIRQN (281 aa)) lie on the Cytoplasmic side of the membrane. Aspartate 436 serves as the catalytic 4-aspartylphosphate intermediate. Aspartate 436, threonine 438, and aspartate 628 together coordinate Mg(2+). The helical transmembrane segment at 686–702 (ITIALGLKGIFLVTTLL) threads the bilayer. At 703–707 (GMTGL) the chain is on the periplasmic side. Residues 708–729 (WLAVLADTGATVLVTANALRLL) traverse the membrane as a helical segment. Aspartate 714 lines the Zn(2+) pocket. Residues 730–732 (RRR) lie on the Cytoplasmic side of the membrane.

The protein belongs to the cation transport ATPase (P-type) (TC 3.A.3) family. Type IB subfamily.

The protein localises to the cell inner membrane. It catalyses the reaction Pb(2+)(in) + ATP + H2O = Pb(2+)(out) + ADP + phosphate + H(+). The catalysed reaction is Zn(2+)(in) + ATP + H2O = Zn(2+)(out) + ADP + phosphate + H(+). The enzyme catalyses Cd(2+)(in) + ATP + H2O = Cd(2+)(out) + ADP + phosphate + H(+). With respect to regulation, inhibited by orthovanadate. In terms of biological role, confers resistance to zinc, cadmium and lead. Couples the hydrolysis of ATP with the export of zinc, cadmium or lead, with highest activity when the metals are present as metal-thiolate complexes. Can also bind nickel, copper, cobalt and mercury. This chain is Zinc/cadmium/lead-transporting P-type ATPase, found in Escherichia coli (strain K12).